A 180-amino-acid polypeptide reads, in one-letter code: Large ribosomal subunit protein uL6 (180 aa).

The protein belongs to the universal ribosomal protein uL6 family. As to quaternary structure, part of the 50S ribosomal subunit.

This protein binds to the 23S rRNA, and is important in its secondary structure. It is located near the subunit interface in the base of the L7/L12 stalk, and near the tRNA binding site of the peptidyltransferase center. This Picrophilus torridus (strain ATCC 700027 / DSM 9790 / JCM 10055 / NBRC 100828 / KAW 2/3) protein is Large ribosomal subunit protein uL6.